The sequence spans 500 residues: Glutathione reductase (500 aa).

Positions 12 and 13 each coordinate FAD. S12 contributes to the glutathione binding site. A glutathione-binding site is contributed by R19. 4 residues coordinate FAD: E32, T39, C40, and K48. Cysteines 40 and 45 form a disulfide. Y95 contributes to the glutathione binding site. A111 lines the FAD pocket. I187, E190, R207, R213, and G272 together coordinate NADP(+). FAD contacts are provided by D312 and T354. Glutathione is bound at residue R362. Residue V384 coordinates NADP(+). H485 is a binding site for FAD. H485 functions as the Proton acceptor in the catalytic mechanism.

This sequence belongs to the class-I pyridine nucleotide-disulfide oxidoreductase family. In terms of assembly, homodimer. Requires FAD as cofactor.

It is found in the cytoplasm. The catalysed reaction is 2 glutathione + NADP(+) = glutathione disulfide + NADPH + H(+). Its function is as follows. Catalyzes the reduction of glutathione disulfide (GSSG) to reduced glutathione (GSH). Constitutes the major mechanism to maintain a high GSH:GSSG ratio in the cytosol. This is Glutathione reductase from Plasmodium falciparum (isolate K1 / Thailand).